Reading from the N-terminus, the 57-residue chain is Defensin-like protein 302 (57 aa).

Cystine bridges form between cysteine 19–cysteine 39, cysteine 26–cysteine 44, and cysteine 32–cysteine 46.

The protein belongs to the DEFL family.

This chain is Defensin-like protein 302, found in Arabidopsis thaliana (Mouse-ear cress).